We begin with the raw amino-acid sequence, 316 residues long: Replication initiation protein (316 aa).

Belongs to the initiator RepB protein family.

This Escherichia coli protein is Replication initiation protein (repA).